The following is an 841-amino-acid chain: Probable outer membrane usher protein EcpC (841 aa).

A signal peptide spans 1 to 29; it reads MPLRRFSPGLKAQFAFGMVFLFVQPDASA.

This sequence belongs to the EcpC/MatD family.

Part of the ecpRABCDE operon, which encodes the E.coli common pilus (ECP). ECP is found in both commensal and pathogenic strains and plays a dual role in early-stage biofilm development and host cell recognition. This is Probable outer membrane usher protein EcpC (ecpC) from Escherichia coli O6:H1 (strain CFT073 / ATCC 700928 / UPEC).